A 140-amino-acid polypeptide reads, in one-letter code: Large ribosomal subunit protein uL14 (140 aa).

Belongs to the universal ribosomal protein uL14 family.

This chain is Large ribosomal subunit protein uL14 (RpL23-A), found in Aedes aegypti (Yellowfever mosquito).